A 350-amino-acid polypeptide reads, in one-letter code: Dihydroorotate dehydrogenase (quinone) (350 aa).

Residues 67–71 (AGFDK) and glycine 91 each bind FMN. Lysine 71 is a substrate binding site. 116 to 120 (NRMGF) is a substrate binding site. Residues asparagine 144 and asparagine 177 each coordinate FMN. Position 177 (asparagine 177) interacts with substrate. The active-site Nucleophile is the serine 180. Asparagine 182 lines the substrate pocket. Residues lysine 213 and threonine 241 each coordinate FMN. 242–243 (NT) is a substrate binding site. The interval 249–268 (ASLHSDAADEEGGLSGAPIT) is disordered. FMN-binding positions include glycine 264, glycine 291, and 312 to 313 (YT).

The protein belongs to the dihydroorotate dehydrogenase family. Type 2 subfamily. Monomer. FMN is required as a cofactor.

Its subcellular location is the cell membrane. The enzyme catalyses (S)-dihydroorotate + a quinone = orotate + a quinol. It functions in the pathway pyrimidine metabolism; UMP biosynthesis via de novo pathway; orotate from (S)-dihydroorotate (quinone route): step 1/1. Functionally, catalyzes the conversion of dihydroorotate to orotate with quinone as electron acceptor. This chain is Dihydroorotate dehydrogenase (quinone), found in Natronomonas pharaonis (strain ATCC 35678 / DSM 2160 / CIP 103997 / JCM 8858 / NBRC 14720 / NCIMB 2260 / Gabara) (Halobacterium pharaonis).